A 695-amino-acid chain; its full sequence is Elongation factor G 1 (695 aa).

The 277-residue stretch at 6-282 (STFRNIGISA…AITYYLPDPT (277 aa)) folds into the tr-type G domain. GTP-binding positions include 15-22 (AHIDSGKT), 82-86 (DTPGH), and 136-139 (NKCD).

The protein belongs to the TRAFAC class translation factor GTPase superfamily. Classic translation factor GTPase family. EF-G/EF-2 subfamily.

The protein resides in the cytoplasm. Catalyzes the GTP-dependent ribosomal translocation step during translation elongation. During this step, the ribosome changes from the pre-translocational (PRE) to the post-translocational (POST) state as the newly formed A-site-bound peptidyl-tRNA and P-site-bound deacylated tRNA move to the P and E sites, respectively. Catalyzes the coordinated movement of the two tRNA molecules, the mRNA and conformational changes in the ribosome. This chain is Elongation factor G 1 (fusA), found in Treponema pallidum (strain Nichols).